Reading from the N-terminus, the 101-residue chain is Enhancer of yellow 2 transcription factor (101 aa).

Belongs to the ENY2 family. Component of the nuclear pore complex (NPC)-associated AMEX complex (anchoring and mRNA export complex), composed of at least e(y)2 and xmas-2. Component of the SAGA transcription coactivator-HAT complexes, at least composed of Ada2b, e(y)2, Pcaf/Gcn5, Taf10 and Nipped-A/Trrap. Within the SAGA complex, e(y)2, Sgf11, and not/nonstop form an additional subcomplex of SAGA called the DUB module (deubiquitination module). Component of the THO complex, composed of at least e(y)2, HPR1, THO2, THOC5, THOC6 and THOC7. Interacts with e(y)1. Interacts with su(Hw) (via zinc fingers). Interacts with xmas-2; required for localization to the nuclear periphery. Interacts with the nuclear pore complex (NPC).

It is found in the nucleus. Its subcellular location is the nucleoplasm. It localises to the cytoplasm. Its function is as follows. Involved in mRNA export coupled transcription activation by association with both the AMEX and the SAGA complexes. The SAGA complex is a multiprotein complex that activates transcription by remodeling chromatin and mediating histone acetylation and deubiquitination. Within the SAGA complex, participates in a subcomplex that specifically deubiquitinates histone H2B. The SAGA complex is recruited to specific gene promoters by activators, where it is required for transcription. Required for nuclear receptor-mediated transactivation. Involved in transcription elongation by recruiting the THO complex onto nascent mRNA. The AMEX complex functions in docking export-competent ribonucleoprotein particles (mRNPs) to the nuclear entrance of the nuclear pore complex (nuclear basket). AMEX participates in mRNA export and accurate chromatin positioning in the nucleus by tethering genes to the nuclear periphery. This is Enhancer of yellow 2 transcription factor from Drosophila simulans (Fruit fly).